We begin with the raw amino-acid sequence, 821 residues long: E3 ubiquitin-protein ligase RSP5 (821 aa).

The C2 domain maps to 1-112 (MGSNLPAQPN…QMGGDEMLTR (112 aa)). Composition is skewed to polar residues over residues 133–144 (TNLSTPNPNQAN) and 188–201 (LNPQ…RPTS). Disordered regions lie at residues 133 to 239 (TNLS…GWER) and 255 to 359 (RTTT…YFVD). Residues 202-217 (QIAPPNGAPPIANGQG) show a composition bias toward low complexity. The WW 1 domain occupies 231–264 (GRLPAGWERREDNLGRTYYVDHNTRTTTWNRPSA). Residues 255-272 (RTTTWNRPSANYNEQTQR) show a composition bias toward polar residues. Basic and acidic residues predominate over residues 281–296 (LERRAHQNRMLPEDRT). Residues 297–312 (GASSPNLSETQPQAQT) show a composition bias toward polar residues. Low complexity predominate over residues 320 to 339 (ASNSNVVSMMATGATTAGTG). 2 WW domains span residues 339-372 (GELP…DPRR) and 399-432 (GPLP…DPRL). In terms of domain architecture, HECT spans 488–821 (SASDLKKRLM…VEETLGFGQE (334 aa)). Residue Cys-789 is the Glycyl thioester intermediate of the active site.

This sequence belongs to the RSP5/NEDD4 family. In terms of assembly, interacts with apyA and creD.

Its subcellular location is the cytoplasm. The catalysed reaction is S-ubiquitinyl-[E2 ubiquitin-conjugating enzyme]-L-cysteine + [acceptor protein]-L-lysine = [E2 ubiquitin-conjugating enzyme]-L-cysteine + N(6)-ubiquitinyl-[acceptor protein]-L-lysine.. It functions in the pathway protein modification; protein ubiquitination. E3 ubiquitin-protein ligase which accepts ubiquitin from an E2 ubiquitin-conjugating enzyme in the form of a thioester and then directly transfers the ubiquitin to targeted substrates. Probably involved in the regulatory network controlling carbon source utilization. Ubiquitinates 'Lys-528' of the uric acid/xanthine transporter uapA at the cell membrane, leading to its internalization, sorting into the endosomal pathway to the vacuolar lumen where it is eventually degraded. The protein is E3 ubiquitin-protein ligase RSP5 (hulA) of Emericella nidulans (strain FGSC A4 / ATCC 38163 / CBS 112.46 / NRRL 194 / M139) (Aspergillus nidulans).